The sequence spans 474 residues: Flotillin-like protein 3 (474 aa).

Cys35 carries the S-palmitoyl cysteine lipid modification. Coiled coils occupy residues Glu235–Ala255 and Gln305–Glu325.

Belongs to the band 7/mec-2 family. Flotillin subfamily. May be palmitoylated. In terms of tissue distribution, expressed in all plant organs. Primarily expressed in vascular tissues. No change in spatial expression in root upon inoculation. Expression limited to the nodule vascular tissue.

Its subcellular location is the cell membrane. The protein localises to the membrane. It localises to the caveola. Its function is as follows. May act as a scaffolding protein within caveolar membranes, functionally participating in formation of caveolae or caveolae-like vesicles. May be involved in nodule formation. In Medicago truncatula (Barrel medic), this protein is Flotillin-like protein 3 (FLOT3).